The primary structure comprises 289 residues: ATP synthase gamma chain (289 aa).

It belongs to the ATPase gamma chain family. As to quaternary structure, F-type ATPases have 2 components, CF(1) - the catalytic core - and CF(0) - the membrane proton channel. CF(1) has five subunits: alpha(3), beta(3), gamma(1), delta(1), epsilon(1). CF(0) has three main subunits: a, b and c.

Its subcellular location is the cell membrane. Its function is as follows. Produces ATP from ADP in the presence of a proton gradient across the membrane. The gamma chain is believed to be important in regulating ATPase activity and the flow of protons through the CF(0) complex. The protein is ATP synthase gamma chain of Lactococcus lactis subsp. cremoris (strain SK11).